We begin with the raw amino-acid sequence, 247 residues long: 23S rRNA (guanosine-2'-O-)-methyltransferase RlmB (247 aa).

Residues Gly-197, Ile-217, and Leu-226 each coordinate S-adenosyl-L-methionine.

The protein belongs to the class IV-like SAM-binding methyltransferase superfamily. RNA methyltransferase TrmH family. RlmB subfamily.

It is found in the cytoplasm. It carries out the reaction guanosine(2251) in 23S rRNA + S-adenosyl-L-methionine = 2'-O-methylguanosine(2251) in 23S rRNA + S-adenosyl-L-homocysteine + H(+). Its function is as follows. Specifically methylates the ribose of guanosine 2251 in 23S rRNA. The sequence is that of 23S rRNA (guanosine-2'-O-)-methyltransferase RlmB from Vibrio cholerae serotype O1 (strain ATCC 39315 / El Tor Inaba N16961).